A 213-amino-acid chain; its full sequence is uncharacterized protein (213 aa).

This is an uncharacterized protein from Homo sapiens (Human).